Here is a 1249-residue protein sequence, read N- to C-terminus: DNA repair protein REV1 (1249 aa).

The BRCT domain occupies Thr-44–Leu-131. A disordered region spans residues Leu-253 to Lys-323. Basic and acidic residues predominate over residues Gln-259 to Thr-275. Positions Arg-294 to Pro-319 are enriched in polar residues. The tract at residues Phe-350–Ser-360 is interaction with target DNA. DCTP contacts are provided by residues Arg-355, Asp-421–Phe-425, Ser-508–Arg-514, Asn-520, and Asp-568. Residues Val-417–Gly-651 enclose the UmuC domain. Asp-421 serves as a coordination point for Mg(2+). Residues Asp-568 and Glu-569 each coordinate Mg(2+). Interaction with target DNA regions lie at residues Gly-651 to Met-654 and Arg-707 to Asn-715. A compositionally biased stretch (basic and acidic residues) spans Ala-1035–Thr-1047. The interval Ala-1035–Lys-1109 is disordered. Positions His-1048–Pro-1057 are enriched in polar residues. The Nuclear localization signal motif lies at Lys-1072–Asn-1078. The interval Phe-1150 to Thr-1249 is protein interaction domain; mediates interaction with DNA polymerase zeta.

This sequence belongs to the DNA polymerase type-Y family. As to quaternary structure, interacts with FAAP20. Monomer. Interacts with the DNA polymerase zeta which is composed of REV3L and MAD2L2; the interaction with MAD2L2 is direct and requires that REV3L is in its closed conformation. Interacts with POLH, POLI and POLK. Ubiquitous.

Its subcellular location is the nucleus. Its function is as follows. Deoxycytidyl transferase involved in DNA repair. Transfers a dCMP residue from dCTP to the 3'-end of a DNA primer in a template-dependent reaction. May assist in the first step in the bypass of abasic lesions by the insertion of a nucleotide opposite the lesion. Required for normal induction of mutations by physical and chemical agents. The protein is DNA repair protein REV1 (Rev1) of Mus musculus (Mouse).